The primary structure comprises 168 residues: 6,7-dimethyl-8-ribityllumazine synthase (168 aa).

Residues Trp-31, Ser-65–Glu-67, and Cys-89–Val-91 each bind 5-amino-6-(D-ribitylamino)uracil. Residue Asp-94–Thr-95 coordinates (2S)-2-hydroxy-3-oxobutyl phosphate. His-97 serves as the catalytic Proton donor. Tyr-122 is a 5-amino-6-(D-ribitylamino)uracil binding site. Arg-136 contributes to the (2S)-2-hydroxy-3-oxobutyl phosphate binding site.

This sequence belongs to the DMRL synthase family.

The catalysed reaction is (2S)-2-hydroxy-3-oxobutyl phosphate + 5-amino-6-(D-ribitylamino)uracil = 6,7-dimethyl-8-(1-D-ribityl)lumazine + phosphate + 2 H2O + H(+). It participates in cofactor biosynthesis; riboflavin biosynthesis; riboflavin from 2-hydroxy-3-oxobutyl phosphate and 5-amino-6-(D-ribitylamino)uracil: step 1/2. In terms of biological role, catalyzes the formation of 6,7-dimethyl-8-ribityllumazine by condensation of 5-amino-6-(D-ribitylamino)uracil with 3,4-dihydroxy-2-butanone 4-phosphate. This is the penultimate step in the biosynthesis of riboflavin. The sequence is that of 6,7-dimethyl-8-ribityllumazine synthase from Phocaeicola vulgatus (strain ATCC 8482 / DSM 1447 / JCM 5826 / CCUG 4940 / NBRC 14291 / NCTC 11154) (Bacteroides vulgatus).